The primary structure comprises 146 residues: Large ribosomal subunit protein uL15 (146 aa).

Positions 1-54 (MKLHELRPAAGSKSAPKRVGRGTGSGLGRNAGKGEKGQNARSGGGVRPGFEGGQ) are disordered. 2 stretches are compositionally biased toward gly residues: residues 21–31 (RGTGSGLGRNA) and 42–52 (SGGGVRPGFEG).

It belongs to the universal ribosomal protein uL15 family. In terms of assembly, part of the 50S ribosomal subunit.

Binds to the 23S rRNA. The sequence is that of Large ribosomal subunit protein uL15 from Clostridium perfringens (strain ATCC 13124 / DSM 756 / JCM 1290 / NCIMB 6125 / NCTC 8237 / Type A).